We begin with the raw amino-acid sequence, 269 residues long: Phosphatidylglycerol--prolipoprotein diacylglyceryl transferase (269 aa).

Transmembrane regions (helical) follow at residues 10–30 (VALA…LIGI), 56–76 (MVFW…VLFY), 92–112 (WKGG…AWWF), 120–140 (FFEL…AGRI), 174–194 (PSQL…LWLF), 202–222 (MAVS…VEFV), and 237–257 (LTMG…LIWL). Arginine 139 provides a ligand contact to a 1,2-diacyl-sn-glycero-3-phospho-(1'-sn-glycerol).

This sequence belongs to the Lgt family.

The protein localises to the cell inner membrane. It carries out the reaction L-cysteinyl-[prolipoprotein] + a 1,2-diacyl-sn-glycero-3-phospho-(1'-sn-glycerol) = an S-1,2-diacyl-sn-glyceryl-L-cysteinyl-[prolipoprotein] + sn-glycerol 1-phosphate + H(+). The protein operates within protein modification; lipoprotein biosynthesis (diacylglyceryl transfer). Catalyzes the transfer of the diacylglyceryl group from phosphatidylglycerol to the sulfhydryl group of the N-terminal cysteine of a prolipoprotein, the first step in the formation of mature lipoproteins. This is Phosphatidylglycerol--prolipoprotein diacylglyceryl transferase from Pseudomonas fluorescens (strain ATCC BAA-477 / NRRL B-23932 / Pf-5).